The primary structure comprises 339 residues: Dihydroorotate dehydrogenase (quinone) (339 aa).

Residues 61 to 65 (AGLDK) and T85 each bind FMN. K65 is a substrate binding site. Residue 110 to 114 (NRMGF) coordinates substrate. The FMN site is built by N138 and N171. N171 is a substrate binding site. S174 functions as the Nucleophile in the catalytic mechanism. Position 176 (N176) interacts with substrate. The FMN site is built by K216 and T244. 245 to 246 (NT) provides a ligand contact to substrate. FMN-binding positions include G267, G296, and 317–318 (YS).

This sequence belongs to the dihydroorotate dehydrogenase family. Type 2 subfamily. As to quaternary structure, monomer. It depends on FMN as a cofactor.

It localises to the cell membrane. It carries out the reaction (S)-dihydroorotate + a quinone = orotate + a quinol. The protein operates within pyrimidine metabolism; UMP biosynthesis via de novo pathway; orotate from (S)-dihydroorotate (quinone route): step 1/1. Functionally, catalyzes the conversion of dihydroorotate to orotate with quinone as electron acceptor. This chain is Dihydroorotate dehydrogenase (quinone), found in Saccharophagus degradans (strain 2-40 / ATCC 43961 / DSM 17024).